The following is a 273-amino-acid chain: Octanoyltransferase (273 aa).

Positions 35–254 (DRVPDTCLLL…HLRDILENAE (220 aa)) constitute a BPL/LPL catalytic domain. Substrate is bound by residues 73 to 80 (RGGKITWH), 184 to 186 (AIG), and 197 to 199 (GFA). Residue Cys-215 is the Acyl-thioester intermediate of the active site.

This sequence belongs to the LipB family.

Its subcellular location is the cytoplasm. It carries out the reaction octanoyl-[ACP] + L-lysyl-[protein] = N(6)-octanoyl-L-lysyl-[protein] + holo-[ACP] + H(+). Its pathway is protein modification; protein lipoylation via endogenous pathway; protein N(6)-(lipoyl)lysine from octanoyl-[acyl-carrier-protein]: step 1/2. Catalyzes the transfer of endogenously produced octanoic acid from octanoyl-acyl-carrier-protein onto the lipoyl domains of lipoate-dependent enzymes. Lipoyl-ACP can also act as a substrate although octanoyl-ACP is likely to be the physiological substrate. The sequence is that of Octanoyltransferase from Streptomyces griseus subsp. griseus (strain JCM 4626 / CBS 651.72 / NBRC 13350 / KCC S-0626 / ISP 5235).